Reading from the N-terminus, the 501-residue chain is uncharacterized protein (501 aa).

Transmembrane regions (helical) follow at residues 14-34, 73-93, 111-131, 197-217, 274-294, 297-317, and 466-486; these read AIFI…SGSV, FILF…LGYM, IFGI…ICIF, FIIA…VLLI, ILLS…YYFG, FNLI…YNLI, and FLVL…RLIL.

It localises to the membrane. This is an uncharacterized protein from Dictyostelium discoideum (Social amoeba).